The chain runs to 522 residues: Amine oxidase [flavin-containing] (522 aa).

The Cytoplasmic segment spans residues 1 to 492; sequence MTANAYDVIV…WERNLPSVGG (492 aa). Cys398 is subject to S-8alpha-FAD cysteine. Residues 493–513 form a helical; Anchor for type IV membrane protein membrane-spanning segment; that stretch reads FLKFMGVSSFLAAATAAGLVA. The Mitochondrial intermembrane segment spans residues 514 to 522; that stretch reads CKKGLLPRC.

This sequence belongs to the flavin monoamine oxidase family. As to quaternary structure, monomer, homo- or heterodimer (containing two subunits of similar size). Each subunit contains a covalently bound flavin. Enzymatically active as monomer. The cofactor is FAD. In terms of tissue distribution, strongest expression in brain and intestine, followed by liver, heart and gill. Little expression in spleen, eye or muscle. In brain, highest activity in noradrenergic and serotonergic cell groups and those of the habenulointerpeduncular pathway; moderate levels in dopaminergic cell clusters.

The protein localises to the mitochondrion outer membrane. It catalyses the reaction a secondary aliphatic amine + O2 + H2O = a primary amine + an aldehyde + H2O2. It carries out the reaction a primary methyl amine + O2 + H2O = an aldehyde + H2O2 + NH4(+). The enzyme catalyses serotonin + O2 + H2O = (5-hydroxyindol-3-yl)acetaldehyde + H2O2 + NH4(+). The catalysed reaction is 2-phenylethylamine + O2 + H2O = 2-phenylacetaldehyde + H2O2 + NH4(+). It catalyses the reaction tyramine + O2 + H2O = (4-hydroxyphenyl)acetaldehyde + H2O2 + NH4(+). It carries out the reaction dopamine + O2 + H2O = 3,4-dihydroxyphenylacetaldehyde + H2O2 + NH4(+). The enzyme catalyses (R)-adrenaline + O2 + H2O = (R)-3,4-dihydroxymandelaldehyde + methylamine + H2O2. The catalysed reaction is (R)-noradrenaline + O2 + H2O = (R)-3,4-dihydroxymandelaldehyde + H2O2 + NH4(+). It catalyses the reaction kynuramine + O2 + H2O = 3-(2-aminophenyl)-3-oxopropanal + H2O2 + NH4(+). It carries out the reaction tryptamine + O2 + H2O = indole-3-acetaldehyde + H2O2 + NH4(+). Inhibited by both clorgyline (selective MAOA inhibitor) and deprenyl (selective MAOB inhibitor). In terms of biological role, catalyzes the oxidative deamination of biogenic and xenobiotic amines and has important functions in the metabolism of neuroactive and vasoactive amines in the central nervous system and peripheral tissues. Preferentially oxidizes serotonin and tyramine. Also catalyzes the oxidative deamination of kynuramine to 3-(2-aminophenyl)-3-oxopropanal that can spontaneously condense to 4-hydroxyquinoline. The sequence is that of Amine oxidase [flavin-containing] from Danio rerio (Zebrafish).